The chain runs to 158 residues: Rhombotin-2 (158 aa).

2 LIM zinc-binding domains span residues Cys-30–Gly-89 and Cys-94–Lys-153.

As to quaternary structure, interacts via its LIM domains with ELF2 and LDB1. Also interacts with basic helix-loop-helix protein TAL1/SCL and can assemble in a complex with LMO2 and TAL1/SCL. Interacts with BEX2 and KDM5A.

The protein resides in the nucleus. Acts with TAL1/SCL to regulate red blood cell development. Also acts with LDB1 to maintain erythroid precursors in an immature state. The sequence is that of Rhombotin-2 (LMO2) from Homo sapiens (Human).